The sequence spans 331 residues: 6-phosphogluconolactonase (331 aa).

Belongs to the cycloisomerase 2 family.

It carries out the reaction 6-phospho-D-glucono-1,5-lactone + H2O = 6-phospho-D-gluconate + H(+). It participates in carbohydrate degradation; pentose phosphate pathway; D-ribulose 5-phosphate from D-glucose 6-phosphate (oxidative stage): step 2/3. Its function is as follows. Catalyzes the hydrolysis of 6-phosphogluconolactone to 6-phosphogluconate. The chain is 6-phosphogluconolactonase from Enterobacter sp. (strain 638).